The chain runs to 111 residues: WAP four-disulfide core domain protein 12 (111 aa).

The first 23 residues, 1 to 23 (MGSSSFLVLTVSLALVTLVAAEG), serve as a signal peptide directing secretion. A WAP domain is found at 27–74 (GIEKAGVCPADNVRCFKSDPPQCHTDQDCLGARKCCYLHCGFKCVIPV). Intrachain disulfides connect C34–C62, C41–C66, C49–C61, and C55–C70. The interval 80-111 (GGNKDEDVSGPCPEPGWEAKSPGSSSTGCPQK) is disordered. Residues 101–111 (PGSSSTGCPQK) show a composition bias toward polar residues.

It localises to the secreted. Its function is as follows. Antibacterial protein. Putative acid-stable proteinase inhibitor. In Papio anubis (Olive baboon), this protein is WAP four-disulfide core domain protein 12 (WFDC12).